A 322-amino-acid polypeptide reads, in one-letter code: UDP-N-acetylenolpyruvoylglucosamine reductase (322 aa).

Residues 36–202 enclose the FAD-binding PCMH-type domain; the sequence is RAGGPAQVLF…TSVLFEGVPG (167 aa). Residue Arg182 is part of the active site. The active-site Proton donor is Ser231. Residue Glu301 is part of the active site.

It belongs to the MurB family. The cofactor is FAD.

The protein resides in the cytoplasm. The catalysed reaction is UDP-N-acetyl-alpha-D-muramate + NADP(+) = UDP-N-acetyl-3-O-(1-carboxyvinyl)-alpha-D-glucosamine + NADPH + H(+). The protein operates within cell wall biogenesis; peptidoglycan biosynthesis. Its function is as follows. Cell wall formation. This Brucella abortus (strain S19) protein is UDP-N-acetylenolpyruvoylglucosamine reductase.